A 464-amino-acid polypeptide reads, in one-letter code: Light-independent protochlorophyllide reductase subunit N (464 aa).

Residues cysteine 29, cysteine 54, and cysteine 114 each coordinate [4Fe-4S] cluster.

This sequence belongs to the BchN/ChlN family. In terms of assembly, protochlorophyllide reductase is composed of three subunits; ChlL, ChlN and ChlB. Forms a heterotetramer of two ChlB and two ChlN subunits. The cofactor is [4Fe-4S] cluster.

It localises to the plastid. The protein resides in the chloroplast. It carries out the reaction chlorophyllide a + oxidized 2[4Fe-4S]-[ferredoxin] + 2 ADP + 2 phosphate = protochlorophyllide a + reduced 2[4Fe-4S]-[ferredoxin] + 2 ATP + 2 H2O. It functions in the pathway porphyrin-containing compound metabolism; chlorophyll biosynthesis (light-independent). Its function is as follows. Component of the dark-operative protochlorophyllide reductase (DPOR) that uses Mg-ATP and reduced ferredoxin to reduce ring D of protochlorophyllide (Pchlide) to form chlorophyllide a (Chlide). This reaction is light-independent. The NB-protein (ChlN-ChlB) is the catalytic component of the complex. The chain is Light-independent protochlorophyllide reductase subunit N from Stigeoclonium helveticum (Green alga).